A 563-amino-acid chain; its full sequence is Alpha-humulene synthase (563 aa).

D316, D320, D461, and E469 together coordinate Mg(2+). A DDXXD motif motif is present at residues 316–320; it reads DDIYD.

It belongs to the terpene synthase family. Tpsa subfamily. Mg(2+) serves as cofactor. Mn(2+) is required as a cofactor. Expressed in trichomes, cones and young leaves.

The enzyme catalyses (2E,6E)-farnesyl diphosphate = alpha-humulene + diphosphate. The protein operates within sesquiterpene biosynthesis. It functions in the pathway secondary metabolite biosynthesis; terpenoid biosynthesis. Sesquiterpene synthase that catalyzes the formation of alpha-humulene. Can use farnesyl diphosphate (FPP) as substrate, but not geranyl diphosphate (GPP) or geranylgeranyl diphosphate (GGPP). The chain is Alpha-humulene synthase from Humulus lupulus (European hop).